The following is a 300-amino-acid chain: Ribosomal protein L11 methyltransferase (300 aa).

4 residues coordinate S-adenosyl-L-methionine: Thr152, Gly173, Asp195, and Asn234.

The protein belongs to the methyltransferase superfamily. PrmA family.

It localises to the cytoplasm. It carries out the reaction L-lysyl-[protein] + 3 S-adenosyl-L-methionine = N(6),N(6),N(6)-trimethyl-L-lysyl-[protein] + 3 S-adenosyl-L-homocysteine + 3 H(+). Its function is as follows. Methylates ribosomal protein L11. This Burkholderia ambifaria (strain ATCC BAA-244 / DSM 16087 / CCUG 44356 / LMG 19182 / AMMD) (Burkholderia cepacia (strain AMMD)) protein is Ribosomal protein L11 methyltransferase.